The chain runs to 403 residues: Argininosuccinate synthase (403 aa).

ATP contacts are provided by residues 10–18 (AYSGGVDTS) and Ala38. Tyr89 serves as a coordination point for L-citrulline. Gly119 lines the ATP pocket. Positions 121, 125, and 126 each coordinate L-aspartate. Asn125 contributes to the L-citrulline binding site. Arg129, Ser177, Ser186, Glu262, and Tyr274 together coordinate L-citrulline.

It belongs to the argininosuccinate synthase family. Type 1 subfamily. As to quaternary structure, homotetramer.

The protein resides in the cytoplasm. The enzyme catalyses L-citrulline + L-aspartate + ATP = 2-(N(omega)-L-arginino)succinate + AMP + diphosphate + H(+). Its pathway is amino-acid biosynthesis; L-arginine biosynthesis; L-arginine from L-ornithine and carbamoyl phosphate: step 2/3. This chain is Argininosuccinate synthase, found in Parasynechococcus marenigrum (strain WH8102).